Here is a 240-residue protein sequence, read N- to C-terminus: UPF0502 protein Veis_2102 (240 aa).

Belongs to the UPF0502 family.

This is UPF0502 protein Veis_2102 from Verminephrobacter eiseniae (strain EF01-2).